A 176-amino-acid polypeptide reads, in one-letter code: Protein MOTHER of FT and TFL1 homolog 1 (176 aa).

This sequence belongs to the phosphatidylethanolamine-binding protein family.

Functionally, may form complexes with phosphorylated ligands by interfering with kinases and their effectors. This is Protein MOTHER of FT and TFL1 homolog 1 from Oryza sativa subsp. japonica (Rice).